Consider the following 59-residue polypeptide: Conorfamide-Vc1 (59 aa).

The first 19 residues, 1-19 (MSGRGFLLLALLLLVTVEA), serve as a signal peptide directing secretion. Residues 20–25 (TKVEKK) constitute a propeptide that is removed on maturation. Residues 32–39 (AWSGPRNR) are positively charged region crucial for activity against MRGPRX1 receptors. At phenylalanine 43 the chain carries Phenylalanine amide. Positions 45–59 (RRDMQSPLLSERLRL) are excised as a propeptide.

It belongs to the FARP (FMRFamide related peptide) family. In terms of tissue distribution, expressed by the venom duct.

It localises to the secreted. Its function is as follows. This peptide activates human and mouse sensory neuron-specific G-protein coupled receptors MRGPRX1. The activity on human receptors has been measured (EC(50)=1.8 uM). Compared with the agonist chloroquine (anti-malaria drug), it is 200-fold more potent. The peptide also causes an increase in cytosolic calcium in a specific subset of DRG neurons, and, in contrast to other Conus venom peptides, the peptide also affects a large fraction of the non-neuronal cells. In vivo, when intracranially injected into mice, it principally renders mice unable to move, and at very low doses, it causes hyperactivity. It also induces itch sensation, since intradermal cheek injection into humanized transgenic mouse (mouse MRGPRX1 replaced by human MRGPRX1) induces scratching. In vivo, when tested at high doses (10 uM) on zebrafish larvae, it induces a range of behavioral effects ranging from an early hypoactivity during the first hour of treatment to an increase in movement during the following hours when the larvae are submitted to strobe light phases. This Conus victoriae (Queen Victoria cone) protein is Conorfamide-Vc1.